Consider the following 170-residue polypeptide: Small ribosomal subunit protein uS13m (170 aa).

Residues 130 to 170 form a disordered region; the sequence is LKKKPTNRKERRIFNKIKKLQDKHNKQQQKNKKSKKWKTKK. 2 stretches are compositionally biased toward basic residues: residues 132–147 and 155–170; these read KKPT…NKIK and KQQQ…KTKK.

Belongs to the universal ribosomal protein uS13 family. In terms of assembly, part of the small ribosomal subunit.

The protein resides in the mitochondrion. In terms of biological role, located at the top of the head of the small subunit, it contacts several helices of the small subunit rRNA. The polypeptide is Small ribosomal subunit protein uS13m (mrps13) (Dictyostelium citrinum (Slime mold)).